A 155-amino-acid chain; its full sequence is 6,7-dimethyl-8-ribityllumazine synthase (155 aa).

Residues F22, 56-58 (AFE), and 80-82 (AVI) each bind 5-amino-6-(D-ribitylamino)uracil. 85–86 (NT) is a binding site for (2S)-2-hydroxy-3-oxobutyl phosphate. H88 (proton donor) is an active-site residue. F113 lines the 5-amino-6-(D-ribitylamino)uracil pocket. R127 is a (2S)-2-hydroxy-3-oxobutyl phosphate binding site.

Belongs to the DMRL synthase family.

The catalysed reaction is (2S)-2-hydroxy-3-oxobutyl phosphate + 5-amino-6-(D-ribitylamino)uracil = 6,7-dimethyl-8-(1-D-ribityl)lumazine + phosphate + 2 H2O + H(+). The protein operates within cofactor biosynthesis; riboflavin biosynthesis; riboflavin from 2-hydroxy-3-oxobutyl phosphate and 5-amino-6-(D-ribitylamino)uracil: step 1/2. Functionally, catalyzes the formation of 6,7-dimethyl-8-ribityllumazine by condensation of 5-amino-6-(D-ribitylamino)uracil with 3,4-dihydroxy-2-butanone 4-phosphate. This is the penultimate step in the biosynthesis of riboflavin. This chain is 6,7-dimethyl-8-ribityllumazine synthase, found in Streptococcus pneumoniae serotype 2 (strain D39 / NCTC 7466).